The following is a 149-amino-acid chain: Ribosome-binding factor A (149 aa).

This sequence belongs to the RbfA family. As to quaternary structure, monomer. Binds 30S ribosomal subunits, but not 50S ribosomal subunits or 70S ribosomes.

Its subcellular location is the cytoplasm. Its function is as follows. One of several proteins that assist in the late maturation steps of the functional core of the 30S ribosomal subunit. Associates with free 30S ribosomal subunits (but not with 30S subunits that are part of 70S ribosomes or polysomes). Required for efficient processing of 16S rRNA. May interact with the 5'-terminal helix region of 16S rRNA. The sequence is that of Ribosome-binding factor A from Caulobacter vibrioides (strain ATCC 19089 / CIP 103742 / CB 15) (Caulobacter crescentus).